Reading from the N-terminus, the 297-residue chain is 4-hydroxy-tetrahydrodipicolinate synthase (297 aa).

Threonine 46 contributes to the pyruvate binding site. Tyrosine 134 acts as the Proton donor/acceptor in catalysis. The active-site Schiff-base intermediate with substrate is lysine 162. Residue isoleucine 209 participates in pyruvate binding.

It belongs to the DapA family. As to quaternary structure, homotetramer; dimer of dimers.

The protein resides in the cytoplasm. The catalysed reaction is L-aspartate 4-semialdehyde + pyruvate = (2S,4S)-4-hydroxy-2,3,4,5-tetrahydrodipicolinate + H2O + H(+). The protein operates within amino-acid biosynthesis; L-lysine biosynthesis via DAP pathway; (S)-tetrahydrodipicolinate from L-aspartate: step 3/4. Functionally, catalyzes the condensation of (S)-aspartate-beta-semialdehyde [(S)-ASA] and pyruvate to 4-hydroxy-tetrahydrodipicolinate (HTPA). In Methanosphaera stadtmanae (strain ATCC 43021 / DSM 3091 / JCM 11832 / MCB-3), this protein is 4-hydroxy-tetrahydrodipicolinate synthase.